Reading from the N-terminus, the 428-residue chain is C4-dicarboxylate transport protein (428 aa).

The next 8 membrane-spanning stretches (helical) occupy residues 8–28 (VLYV…HYYP), 44–64 (LIKM…IAGM), 78–98 (LLYF…ATHI), 148–168 (GEIL…AHLG), 184–204 (VLFG…FGAM), 222–242 (LIGT…GAIA), 307–327 (IYMT…LTWM), and 355–375 (AATL…ILGI).

The protein belongs to the dicarboxylate/amino acid:cation symporter (DAACS) (TC 2.A.23) family.

The protein localises to the cell inner membrane. Responsible for the transport of dicarboxylates such as succinate, fumarate, and malate from the periplasm across the membrane. This Burkholderia mallei (strain ATCC 23344) protein is C4-dicarboxylate transport protein.